The sequence spans 234 residues: Glucosamine-6-phosphate deaminase (234 aa).

The Proton acceptor; for enolization step role is filled by Asp-63. Residue Asn-129 is the For ring-opening step of the active site. The Proton acceptor; for ring-opening step role is filled by His-131. Catalysis depends on Glu-136, which acts as the For ring-opening step.

This sequence belongs to the glucosamine/galactosamine-6-phosphate isomerase family. NagB subfamily.

The catalysed reaction is alpha-D-glucosamine 6-phosphate + H2O = beta-D-fructose 6-phosphate + NH4(+). The protein operates within amino-sugar metabolism; N-acetylneuraminate degradation; D-fructose 6-phosphate from N-acetylneuraminate: step 5/5. Catalyzes the reversible isomerization-deamination of glucosamine 6-phosphate (GlcN6P) to form fructose 6-phosphate (Fru6P) and ammonium ion. The chain is Glucosamine-6-phosphate deaminase from Listeria monocytogenes serotype 4b (strain CLIP80459).